Here is an 877-residue protein sequence, read N- to C-terminus: Inner centromere protein (877 aa).

The segment at 47–142 is disordered; sequence HYSDQPELMP…SQVAAPADRS (96 aa). Basic residues predominate over residues 62 to 71; it reads KNRKRRKRPS. Positions 98-111 are enriched in basic and acidic residues; that stretch reads SKRDSQRLQNKEDT. The segment covering 119–134 has biased composition (polar residues); it reads QELSSQTVSRRLTRSQ. Positions 135–270 are interaction with CBX5; it reads VAAPADRSEV…KHNERDDKEP (136 aa). The short motif at 155 to 159 is the PXVXL/I motif element; that stretch reads PVVEI. Disordered regions lie at residues 178–210, 248–459, 498–548, 572–695, and 707–805; these read RAEN…PAAS, LGLE…ASKV, LQHD…RLRK, ALFD…KAAR, and LQKE…PAWA. Residues 261–271 are compositionally biased toward basic and acidic residues; the sequence is KHNERDDKEPS. A compositionally biased stretch (polar residues) spans 272–283; sequence QRTTDSPETPTG. A compositionally biased stretch (low complexity) spans 339–351; it reads SVSSSSVNGSGSE. Over residues 384 to 403 the composition is skewed to polar residues; that stretch reads LRSQTVNRNEQQQETSNNEC. Basic and acidic residues-rich tracts occupy residues 500–548, 572–591, 598–615, 624–695, and 707–742; these read HDPK…RLRK, ALFD…EEKI, KKME…EARK, EERR…KAAR, and LQKE…KAKD. The SAH stretch occupies residues 503 to 715; that stretch reads KEKERQKLQA…QLQKEMEKKE (213 aa). Over residues 744 to 765 the composition is skewed to polar residues; it reads AQTQHLENKENSPACNSYQMTP. The segment at 781–823 is IN box; sequence YGMDLNSDDSTDDESQPRKPIPAWASGNQLSQAVIRQYYNPPN.

The protein belongs to the INCENP family. In terms of assembly, component of the chromosomal passenger complex (CPC) composed of at least BIRC5/survivin, CDCA8/borealin, INCENP and AURKB; in the complex binds directly to AURKB via the IN box, and forms a triple-helix bundle-based subcomplex with BIRC5 and CDCA8 via its N-terminus. The initially reported homodimerization is questioned as the SAH domain is shown to be monomeric. Interacts with CBX5.

It is found in the nucleus. Its subcellular location is the chromosome. The protein resides in the centromere. The protein localises to the cytoplasm. It localises to the cytoskeleton. It is found in the spindle. Its subcellular location is the midbody. The protein resides in the kinetochore. Its function is as follows. Component of the chromosomal passenger complex (CPC), a complex that acts as a key regulator of mitosis. The CPC complex has essential functions at the centromere in ensuring correct chromosome alignment and segregation and is required for chromatin-induced microtubule stabilization and spindle assembly. Acts as a scaffold regulating CPC localization and activity. The C-terminus associates with AURKB, the N-terminus associated with BIRC5/survivin and CDCA8/borealin tethers the CPC to the inner centromere, and the microtubule binding activity within the central SAH domain directs AURKB toward substrates near microtubules. The flexibility of the SAH domain is proposed to allow AURKB to follow substrates on dynamic microtubules while ensuring CPC docking to static chromatin. Activates AURKB. The polypeptide is Inner centromere protein (INCENP) (Gallus gallus (Chicken)).